The following is a 325-amino-acid chain: uncharacterized protein (325 aa).

The segment at 1–75 is disordered; that stretch reads MSQPPEHPGN…PPPGYPTHLQ (75 aa). Composition is skewed to pro residues over residues 24-39 and 50-70; these read YPPPGYGAPPPPPGYG and YNAPPPPPGYGPPPGPPPPGY. 4 helical membrane-spanning segments follow: residues 96-116, 153-173, 205-225, and 273-293; these read AVTLVVPVLAYAVALAAVIGA, IVMFLGYIALFALVLYMHAGI, LLIVALTFIGGLLCVIPGLIF, and LVGELLCFVGMLIGIPVAALI.

It localises to the cell membrane. This is an uncharacterized protein from Mycobacterium tuberculosis (strain CDC 1551 / Oshkosh).